Here is an 812-residue protein sequence, read N- to C-terminus: Collagen-like protein 5 (812 aa).

Asn-13 and Asn-83 each carry an N-linked (GlcNAc...) asparagine; by host glycan. Collagen-like domains follow at residues Gly-69–Asp-128, Gly-143–Asn-502, and Gly-506–Ala-565. The tract at residues Ser-71–Asn-568 is disordered. 4 stretches are compositionally biased toward basic and acidic residues: residues Thr-88–Asp-112, Ser-121–Ser-435, Ser-444–Lys-523, and Val-531–Ile-561. Asn-502 carries N-linked (GlcNAc...) asparagine; by host glycosylation. N-linked (GlcNAc...) asparagine; by host glycosylation is found at Asn-637, Asn-658, and Asn-667. A disordered region spans residues Gly-730–Asp-802. The segment covering Phe-752–Gly-765 has biased composition (gly residues).

In terms of processing, may be hydroxylated on lysine by the viral-encoded procollagen-lysine,2-oxoglutarate 5-dioxygenase.

It is found in the virion. May participate in the formation of a layer of cross-linked glycosylated fibrils at the viral surface thus giving it a hairy-like appearance. The protein is Collagen-like protein 5 of Acanthamoeba polyphaga (Amoeba).